The chain runs to 251 residues: tRNA (guanine-N(7)-)-methyltransferase (251 aa).

S-adenosyl-L-methionine is bound by residues G72, 95 to 96, 132 to 133, and L152; these read EI and NA. Residue D155 is part of the active site. Residue 230-232 coordinates S-adenosyl-L-methionine; sequence SEE.

Belongs to the class I-like SAM-binding methyltransferase superfamily. TrmB family.

The protein resides in the nucleus. It catalyses the reaction guanosine(46) in tRNA + S-adenosyl-L-methionine = N(7)-methylguanosine(46) in tRNA + S-adenosyl-L-homocysteine. It participates in tRNA modification; N(7)-methylguanine-tRNA biosynthesis. Its function is as follows. Catalyzes the formation of N(7)-methylguanine at position 46 (m7G46) in tRNA. This is tRNA (guanine-N(7)-)-methyltransferase from Drosophila willistoni (Fruit fly).